The primary structure comprises 255 residues: Ribosomal RNA small subunit methyltransferase A (255 aa).

S-adenosyl-L-methionine is bound by residues Asn13, Leu15, Gly40, Glu61, Asp85, and Asn103.

It belongs to the class I-like SAM-binding methyltransferase superfamily. rRNA adenine N(6)-methyltransferase family. RsmA subfamily.

It is found in the cytoplasm. The catalysed reaction is adenosine(1518)/adenosine(1519) in 16S rRNA + 4 S-adenosyl-L-methionine = N(6)-dimethyladenosine(1518)/N(6)-dimethyladenosine(1519) in 16S rRNA + 4 S-adenosyl-L-homocysteine + 4 H(+). In terms of biological role, specifically dimethylates two adjacent adenosines (A1518 and A1519) in the loop of a conserved hairpin near the 3'-end of 16S rRNA in the 30S particle. May play a critical role in biogenesis of 30S subunits. In Dechloromonas aromatica (strain RCB), this protein is Ribosomal RNA small subunit methyltransferase A.